A 177-amino-acid chain; its full sequence is Nucleoside triphosphate/diphosphate phosphatase (177 aa).

Arg23 (proton donor) is an active-site residue. Mg(2+) contacts are provided by Asn87, Asp103, Asp105, Asp107, Asp120, and Glu123.

This sequence belongs to the Ntdp family. It depends on Mg(2+) as a cofactor.

The catalysed reaction is a ribonucleoside 5'-triphosphate + H2O = a ribonucleoside 5'-diphosphate + phosphate + H(+). The enzyme catalyses a ribonucleoside 5'-diphosphate + H2O = a ribonucleoside 5'-phosphate + phosphate + H(+). Its function is as follows. Has nucleoside phosphatase activity towards nucleoside triphosphates and nucleoside diphosphates. The sequence is that of Nucleoside triphosphate/diphosphate phosphatase from Streptococcus pneumoniae (strain ATCC 700669 / Spain 23F-1).